The following is a 690-amino-acid chain: Hypersensitivity response secretion protein HrcV (690 aa).

Transmembrane regions (helical) follow at residues 14 to 36 (IGIA…TMLI), 48 to 72 (VVLL…LLLF), 104 to 128 (LVVG…FIVI), 196 to 216 (AIAG…IGIT), 229 to 253 (FAVL…AAGV), and 291 to 315 (LLMG…LIFV).

It belongs to the FHIPEP (flagella/HR/invasion proteins export pore) family.

Its subcellular location is the cell inner membrane. Functionally, involved in the secretion of PopA, a proteinaceous elicitor of the hypersensitivity response in plants. The sequence is that of Hypersensitivity response secretion protein HrcV (hrcV) from Ralstonia nicotianae (strain ATCC BAA-1114 / GMI1000) (Ralstonia solanacearum).